The primary structure comprises 159 residues: SsrA-binding protein (159 aa).

Belongs to the SmpB family.

It localises to the cytoplasm. In terms of biological role, required for rescue of stalled ribosomes mediated by trans-translation. Binds to transfer-messenger RNA (tmRNA), required for stable association of tmRNA with ribosomes. tmRNA and SmpB together mimic tRNA shape, replacing the anticodon stem-loop with SmpB. tmRNA is encoded by the ssrA gene; the 2 termini fold to resemble tRNA(Ala) and it encodes a 'tag peptide', a short internal open reading frame. During trans-translation Ala-aminoacylated tmRNA acts like a tRNA, entering the A-site of stalled ribosomes, displacing the stalled mRNA. The ribosome then switches to translate the ORF on the tmRNA; the nascent peptide is terminated with the 'tag peptide' encoded by the tmRNA and targeted for degradation. The ribosome is freed to recommence translation, which seems to be the essential function of trans-translation. This Acidothermus cellulolyticus (strain ATCC 43068 / DSM 8971 / 11B) protein is SsrA-binding protein.